The primary structure comprises 276 residues: Large ribosomal subunit protein uL2 (276 aa).

The tract at residues 224–254 (VMNPVDHPHGGGEGRTSGGRHPVTPWGVPTK) is disordered.

It belongs to the universal ribosomal protein uL2 family. In terms of assembly, part of the 50S ribosomal subunit. Forms a bridge to the 30S subunit in the 70S ribosome.

One of the primary rRNA binding proteins. Required for association of the 30S and 50S subunits to form the 70S ribosome, for tRNA binding and peptide bond formation. It has been suggested to have peptidyltransferase activity; this is somewhat controversial. Makes several contacts with the 16S rRNA in the 70S ribosome. This Gluconobacter oxydans (strain 621H) (Gluconobacter suboxydans) protein is Large ribosomal subunit protein uL2.